The sequence spans 210 residues: Protein RCR2 (210 aa).

A helical membrane pass occupies residues 41–61; sequence WIFFIFFIVALLILLFSTAKV. A disordered region spans residues 125-149; it reads PNGKTEYLAPPPLSEEQASSTDKDL. Position 161 is a phosphoserine (serine 161). Polar residues predominate over residues 175–199; it reads NNFVNGQSNRNEQHSPTVESSSFDV. A disordered region spans residues 175 to 210; that stretch reads NNFVNGQSNRNEQHSPTVESSSFDVNNAPARAKVSK. The residue at position 191 (threonine 191) is a Phosphothreonine.

The protein to yeast YBR005W.

It is found in the membrane. This Saccharomyces cerevisiae (strain ATCC 204508 / S288c) (Baker's yeast) protein is Protein RCR2 (RCR2).